The sequence spans 396 residues: Stearoyl-[acyl-carrier-protein] 9-desaturase, chloroplastic (396 aa).

Residues Met1–Met33 constitute a chloroplast transit peptide. Ala34 is subject to Blocked amino end (Ala); partial. Glu138, Glu176, His179, Glu229, Glu262, and His265 together coordinate Fe cation.

This sequence belongs to the fatty acid desaturase type 2 family. Homodimer. Requires Fe(2+) as cofactor. Post-translationally, most of the N-terminus is blocked.

Its subcellular location is the plastid. It is found in the chloroplast. It carries out the reaction octadecanoyl-[ACP] + 2 reduced [2Fe-2S]-[ferredoxin] + O2 + 2 H(+) = (9Z)-octadecenoyl-[ACP] + 2 oxidized [2Fe-2S]-[ferredoxin] + 2 H2O. It participates in lipid metabolism; fatty acid metabolism. Functionally, converts stearoyl-ACP to oleoyl-ACP by introduction of a cis double bond between carbons 9 and 10 of the acyl chain. The sequence is that of Stearoyl-[acyl-carrier-protein] 9-desaturase, chloroplastic from Carthamus tinctorius (Safflower).